Consider the following 78-residue polypeptide: COP9 signalosome complex subunit 5b (78 aa).

Belongs to the peptidase M67A family. CSN5 subfamily. Component of the CSN complex, probably composed of CSN1, CSN2, CSN3, CSN4, CSN5 (CSN5A or CSN5B), CSN6 (CSN6A or CSN6B), CSN7 and CSN8. A divalent metal cation serves as cofactor.

The protein resides in the cytoplasm. It is found in the nucleus. Probable protease subunit of the COP9 signalosome complex (CSN), a complex involved in various cellular and developmental processes such as photomorphogenesis and auxin and jasmonate responses. The CSN complex is an essential regulator of the ubiquitin (Ubl) conjugation pathway by mediating the deneddylation of the cullin subunits of the SCF-type E3 ligase complexes, leading to decrease the Ubl ligase activity of SCF. In the complex, it probably acts as the catalytic center that mediates the cleavage of Nedd8 from cullins. It however has no metalloprotease activity by itself and requires the other subunits of the CSN complex. The CSN complex is involved in repression of photomorphogenesis in darkness by regulating the activity of COP1-containing Ubl ligase complexes. This chain is COP9 signalosome complex subunit 5b (CSN5B), found in Brassica oleracea (Wild cabbage).